We begin with the raw amino-acid sequence, 423 residues long: Elongation factor 1-alpha (423 aa).

The 207-residue stretch at 5–211 (KEHINLAFIG…DNLEPPEKPT (207 aa)) folds into the tr-type G domain. Residues 14–21 (GHVDHGKS) are G1. Residue 14–21 (GHVDHGKS) coordinates GTP. Position 21 (serine 21) interacts with Mg(2+). The segment at 60–64 (GVTID) is G2. The segment at 81–84 (DCPG) is G3. Residues 81-85 (DCPGH) and 136-139 (NKMD) contribute to the GTP site. Residues 136–139 (NKMD) are G4. The tract at residues 175 to 177 (SAF) is G5.

The protein belongs to the TRAFAC class translation factor GTPase superfamily. Classic translation factor GTPase family. EF-Tu/EF-1A subfamily.

It localises to the cytoplasm. The enzyme catalyses GTP + H2O = GDP + phosphate + H(+). GTP hydrolase that promotes the GTP-dependent binding of aminoacyl-tRNA to the A-site of ribosomes during protein biosynthesis. In Methanopyrus kandleri (strain AV19 / DSM 6324 / JCM 9639 / NBRC 100938), this protein is Elongation factor 1-alpha.